An 849-amino-acid chain; its full sequence is MAP7 domain-containing protein 1 (849 aa).

Disordered regions lie at residues 1 to 151 (MESG…REER) and 186 to 210 (EQRL…EKNK). Residues 24–41 (EPRPSPEGDPSPPPPPTP) show a composition bias toward pro residues. 2 positions are modified to phosphothreonine: Thr-49 and Thr-53. Phosphoserine is present on residues Ser-72 and Ser-95. Phosphothreonine is present on Thr-99. 2 positions are modified to phosphoserine: Ser-115 and Ser-118. Position 120 is a phosphothreonine (Thr-120). Phosphoserine is present on residues Ser-125 and Ser-127. Basic and acidic residues predominate over residues 132-151 (QDVKKAGERHKLAKERREER). Residues 167 to 223 (EKAKALREKQLQERRRRLEEQRLKAEQRRAALEERQRQKLEKNKERYEAAIQRSVKK) adopt a coiled-coil conformation. 5 positions are modified to phosphoserine: Ser-256, Ser-275, Ser-315, Ser-368, and Ser-401. The segment at 318–815 (TLPRNGRDQG…GFPAKGTAGD (498 aa)) is disordered. A compositionally biased stretch (basic and acidic residues) spans 407 to 437 (RRLEATPVQKKEKKDKERENEKEKSALARER). Residues Ser-444, Ser-448, Ser-454, and Ser-460 each carry the phosphoserine modification. Positions 457–474 (AELSTKSKARPTSPSTTW) are enriched in polar residues. Residue Lys-462 forms a Glycyl lysine isopeptide (Lys-Gly) (interchain with G-Cter in SUMO2) linkage. 2 positions are modified to phosphoserine: Ser-479 and Ser-496. Over residues 479-497 (SPCPSPGPGHTLPPKPPSP) the composition is skewed to pro residues. The span at 523-539 (PEDKNHSKSRTAEEKEP) shows a compositional bias: basic and acidic residues. Over residues 542-556 (PASPAPSPVPSPTPA) the composition is skewed to pro residues. Residues Ser-544, Ser-548, and Ser-552 each carry the phosphoserine modification. Thr-554 is modified (phosphothreonine). Residues 568-582 (PPDTAVPAVPTVPTF) show a composition bias toward low complexity. Residues 602–724 (TTDREEATRL…QERRKRLEEI (123 aa)) are a coiled coil. Over residues 603–743 (TDREEATRLL…AETKKQDGKE (141 aa)) the composition is skewed to basic and acidic residues.

The protein belongs to the MAP7 family.

It is found in the cytoplasm. The protein localises to the cytoskeleton. It localises to the spindle. The protein resides in the microtubule organizing center. Its subcellular location is the centrosome. It is found in the midbody. In terms of biological role, microtubule-stabilizing protein involved in the control of cell motility and neurite outgrowth. Facilitate microtubule stabilization through the maintenance of acetylated stable microtubules. The polypeptide is MAP7 domain-containing protein 1 (Map7d1) (Rattus norvegicus (Rat)).